The following is a 218-amino-acid chain: Pyridoxine/pyridoxamine 5'-phosphate oxidase (218 aa).

Residues Arg-12 to Tyr-15 and Arg-70 contribute to the substrate site. FMN contacts are provided by residues Arg-65 to Arg-70, Tyr-80 to Thr-81, Lys-87, and Gln-109. Positions 127, 131, and 135 each coordinate substrate. Residues Gln-145 to Ser-146 and Trp-191 each bind FMN. Arg-197–His-199 provides a ligand contact to substrate. Residue Arg-201 participates in FMN binding.

The protein belongs to the pyridoxamine 5'-phosphate oxidase family. In terms of assembly, homodimer. FMN is required as a cofactor.

The catalysed reaction is pyridoxamine 5'-phosphate + O2 + H2O = pyridoxal 5'-phosphate + H2O2 + NH4(+). It catalyses the reaction pyridoxine 5'-phosphate + O2 = pyridoxal 5'-phosphate + H2O2. Its pathway is cofactor metabolism; pyridoxal 5'-phosphate salvage; pyridoxal 5'-phosphate from pyridoxamine 5'-phosphate: step 1/1. It participates in cofactor metabolism; pyridoxal 5'-phosphate salvage; pyridoxal 5'-phosphate from pyridoxine 5'-phosphate: step 1/1. In terms of biological role, catalyzes the oxidation of either pyridoxine 5'-phosphate (PNP) or pyridoxamine 5'-phosphate (PMP) into pyridoxal 5'-phosphate (PLP). This Deinococcus geothermalis (strain DSM 11300 / CIP 105573 / AG-3a) protein is Pyridoxine/pyridoxamine 5'-phosphate oxidase.